A 174-amino-acid polypeptide reads, in one-letter code: Large ribosomal subunit protein uL16 (174 aa).

Belongs to the universal ribosomal protein uL16 family.

The sequence is that of Large ribosomal subunit protein uL16 from Methanocaldococcus jannaschii (strain ATCC 43067 / DSM 2661 / JAL-1 / JCM 10045 / NBRC 100440) (Methanococcus jannaschii).